The following is a 292-amino-acid chain: Inhibitory synaptic factor 1 (292 aa).

Disordered regions lie at residues 1-25, 122-186, and 198-292; these read MNIR…RERI, SDSV…ERVR, and CDDE…KGKN. Residues 23–63 adopt a coiled-coil conformation; sequence ERIRQRMKMVIGQLEDILRELKEVAKELREVVSQIDKLTSD. The segment covering 198-214 has biased composition (acidic residues); it reads CDDEEGDGEEEAAEEEG. A compositionally biased stretch (polar residues) spans 263-285; it reads RNSSTQTVSDKSTQTVLPYTATR.

It belongs to the INSYN1 family. Interacts with GPHN.

The protein resides in the postsynaptic density. In terms of biological role, component of the protein machinery at the inhibitory synapses, probably acting as a scaffold. Inhibitory synapses dampen neuronal activity through postsynaptic hyperpolarization. This synaptic inhibition is fundamental for the functioning of the central nervous system, shaping and orchestrating the flow of information through neuronal networks to generate a precise neural code. This Bos taurus (Bovine) protein is Inhibitory synaptic factor 1.